Consider the following 929-residue polypeptide: Protein translocase subunit SecA (929 aa).

Residues Gln-83, Gly-101 to Thr-105, and Asp-491 contribute to the ATP site.

It belongs to the SecA family. In terms of assembly, monomer and homodimer. Part of the essential Sec protein translocation apparatus which comprises SecA, SecYEG and auxiliary proteins SecDF. Other proteins may also be involved.

The protein localises to the cell inner membrane. It localises to the cellular thylakoid membrane. Its subcellular location is the cytoplasm. It catalyses the reaction ATP + H2O + cellular proteinSide 1 = ADP + phosphate + cellular proteinSide 2.. In terms of biological role, part of the Sec protein translocase complex. Interacts with the SecYEG preprotein conducting channel. Has a central role in coupling the hydrolysis of ATP to the transfer of proteins into and across the cell membrane, serving as an ATP-driven molecular motor driving the stepwise translocation of polypeptide chains across the membrane. Probably participates in protein translocation into and across both the cytoplasmic and thylakoid membranes in cyanobacterial cells. The polypeptide is Protein translocase subunit SecA (Thermosynechococcus vestitus (strain NIES-2133 / IAM M-273 / BP-1)).